A 235-amino-acid chain; its full sequence is Repeat element protein (235 aa).

Residues 57–235 (IFQELLERLS…ARRKKCRFSQ (179 aa)) form a repeat element region.

This chain is Repeat element protein, found in Campoletis sonorensis (CsIV).